The chain runs to 277 residues: Methyltransferase str3 (277 aa).

The protein belongs to the methyltransferase superfamily. LaeA methyltransferase family.

The protein operates within mycotoxin biosynthesis. Its function is as follows. Methyltransferase; part of the gene cluster that mediates the biosynthesis of strobilurin A, an antifungal polyketide that contains a key beta-methoxyacrylate toxophore that targets the complex III of the mitochondrial electron transport chain. Strobilurin biosynthesis begins with construction of benzoyl CoA by step-wise elimination of ammonia from phenylalanine by the phenylalanine ammonia-lyase str11, oxygenation by str8 and retro-Claisen reaction to form benzoic acid, which is activated to its CoA thiolester benzoyl CoA by the dedicated CoA ligase str10. Benzoyl CoA forms the starter unit for the highly reducing polyketide synthase stpks1 that produces the polyketide prestrobilutin A. The FAD-dependent oxygenase str9 then catalyzes the key oxidative rearrangement responsible for the creation of the beta-methoxyacrylate toxophore. Str9 performs epoxidation of the 2,3 olefin of prestrobilutin A, followed by Meinwald rearrangement to furnish the aldehyde intermediate. Rapid enolization of the aldehyde intermediate would give the beta-methoxyacrylate skeleton and methylations catalyzed by str2 and str3 complete the synthesis and lead to the production of strobilurin A. The short-chain dehydrogenase stl2 and the dehydrogenase str4 play a role in the shunt pathway leading to the production of bolineol. The cluster encodes no obvious halogenase gene that could be involved in production of strobilurin B, nor any obvious dimethylallyl-transferase that could be involved in the production of strobilurin G. It is possible that unknown proteins encoded in, or near, the cluster (such as str1 or stl1) may form new classes of halogenases or dimethylally-transferases, or that the responsible genes are located elsewhere on the genome. Similarly, proteins encoded by str5/str6 hydrolases appear to have no chemical role in the biosynthesis of strobilurin A. Finally, no obvious self-resistance gene is found within the cluster. This Strobilurus tenacellus protein is Methyltransferase str3.